The following is a 333-amino-acid chain: PDZ domain-containing protein GIPC1 (333 aa).

The span at methionine 1–alanine 11 shows a compositional bias: basic residues. Positions methionine 1–leucine 54 are disordered. Gly residues predominate over residues glycine 23 to glutamine 44. Serine 68 is subject to Phosphoserine. The PDZ domain occupies glutamate 133 to glutamate 213. A phosphoserine mark is found at serine 222, serine 225, and serine 232. The tract at residues glutamine 223–arginine 244 is disordered. Over residues glycine 228 to arginine 240 the composition is skewed to gly residues. Threonine 242 bears the Phosphothreonine mark. At serine 247 the chain carries Phosphoserine.

This sequence belongs to the GIPC family. Interacts with GLUT1 (C-terminus), ACTN1, KIF1B, MYO6, PLEKHG5, SDC4/syndecan-4 and SEMA4C/semaphorin-4C. Interacts with RGS19 C-terminus. Interacts with HTLV-I Tax through the PDZ domain. In terms of tissue distribution, widely expressed. Expressed in skeletal muscle (at protein level).

It localises to the cytoplasm. Its subcellular location is the membrane. May be involved in G protein-linked signaling. The polypeptide is PDZ domain-containing protein GIPC1 (GIPC1) (Homo sapiens (Human)).